Reading from the N-terminus, the 200-residue chain is dITP/XTP pyrophosphatase (200 aa).

19 to 24 serves as a coordination point for substrate; sequence TSNAGK. Glutamate 49 and aspartate 78 together coordinate Mg(2+). Aspartate 78 functions as the Proton acceptor in the catalytic mechanism. Substrate contacts are provided by residues serine 79, 158-161, lysine 181, and 186-187; these read FGYD and HR.

The protein belongs to the HAM1 NTPase family. As to quaternary structure, homodimer. It depends on Mg(2+) as a cofactor.

The enzyme catalyses XTP + H2O = XMP + diphosphate + H(+). It carries out the reaction dITP + H2O = dIMP + diphosphate + H(+). The catalysed reaction is ITP + H2O = IMP + diphosphate + H(+). Pyrophosphatase that catalyzes the hydrolysis of nucleoside triphosphates to their monophosphate derivatives, with a high preference for the non-canonical purine nucleotides XTP (xanthosine triphosphate), dITP (deoxyinosine triphosphate) and ITP. Seems to function as a house-cleaning enzyme that removes non-canonical purine nucleotides from the nucleotide pool, thus preventing their incorporation into DNA/RNA and avoiding chromosomal lesions. The sequence is that of dITP/XTP pyrophosphatase from Deinococcus radiodurans (strain ATCC 13939 / DSM 20539 / JCM 16871 / CCUG 27074 / LMG 4051 / NBRC 15346 / NCIMB 9279 / VKM B-1422 / R1).